The chain runs to 75 residues: CDC42 small effector protein 1 (75 aa).

2 S-palmitoyl cysteine lipidation sites follow: Cys10 and Cys11. The CRIB domain maps to 30 to 43 (IGEPTNFVHLTHIG). Residues 45-75 (GEMADGMQPSGPIKEQMRSKVPHANGRNSLL) are disordered.

This sequence belongs to the CDC42SE/SPEC family.

It localises to the cytoplasm. The protein localises to the cytoskeleton. The protein resides in the cell membrane. In terms of biological role, probably involved in the organization of the actin cytoskeleton by acting downstream of CDC42, inducing actin filament assembly. The sequence is that of CDC42 small effector protein 1 (cdc42se1) from Danio rerio (Zebrafish).